A 28-amino-acid polypeptide reads, in one-letter code: Dermaseptin-6TR (28 aa).

Expressed by the skin glands.

The protein resides in the secreted. Functionally, has antimicrobial activity. The chain is Dermaseptin-6TR from Phyllomedusa trinitatis (Trinidad leaf frog).